The following is a 274-amino-acid chain: Tryptase beta-2 (274 aa).

The first 19 residues, 1 to 19 (MLKLLLLLALSPLASLVHA), serve as a signal peptide directing secretion. The propeptide at 20–29 (APCPVKQRVG) is activation peptide. A Peptidase S1 domain is found at 30 to 271 (IVGGREASES…YLDWIHRYVP (242 aa)). Cys-58 and Cys-74 form a disulfide bridge. The active-site Charge relay system is His-73. Residue Tyr-96 is modified to Phosphotyrosine. The N-linked (GlcNAc...) asparagine glycan is linked to Asn-104. Asp-120 (charge relay system) is an active-site residue. N-linked (GlcNAc...) asparagine glycosylation is present at Asn-131. 3 disulfide bridges follow: Cys-154–Cys-229, Cys-187–Cys-210, and Cys-219–Cys-247. The active-site Charge relay system is the Ser-223.

This sequence belongs to the peptidase S1 family. Tryptase subfamily. Homotetramer. The active tetramer is converted to inactive monomers at neutral and acidic pH in the absence of heparin. Low concentrations of inactive monomers become active monomers at pH 6.0 in the presence of heparin. When the concentration of active monomers is higher, they convert to active monomers and then to active tetramers. These monomers are active and functionally distinct from the tetrameric enzyme. In contrast to the hidden active sites in the tetrameric form, the active site of the monomeric form is accessible for macromolecular proteins and inhibitors, e.g. fibrinogen which is a substrate for the monomeric but not for the tetrameric form. The monomeric form forms a complex with SERPINB6.

The protein localises to the secreted. The enzyme catalyses Preferential cleavage: Arg-|-Xaa, Lys-|-Xaa, but with more restricted specificity than trypsin.. In terms of biological role, tryptase is the major neutral protease present in mast cells and is secreted upon the coupled activation-degranulation response of this cell type. Plays a role in innate immunity. The chain is Tryptase beta-2 (Tpsb2) from Rattus norvegicus (Rat).